A 227-amino-acid chain; its full sequence is Large ribosomal subunit protein bL25 (227 aa).

Positions 199–227 are disordered; the sequence is AIAEAQSAEAAEEKAEESAEDEKKDGEEA. The segment covering 209 to 227 has biased composition (basic and acidic residues); that stretch reads AEEKAEESAEDEKKDGEEA.

It belongs to the bacterial ribosomal protein bL25 family. CTC subfamily. As to quaternary structure, part of the 50S ribosomal subunit; part of the 5S rRNA/L5/L18/L25 subcomplex. Contacts the 5S rRNA. Binds to the 5S rRNA independently of L5 and L18.

This is one of the proteins that binds to the 5S RNA in the ribosome where it forms part of the central protuberance. In Methylobacterium radiotolerans (strain ATCC 27329 / DSM 1819 / JCM 2831 / NBRC 15690 / NCIMB 10815 / 0-1), this protein is Large ribosomal subunit protein bL25.